The primary structure comprises 314 residues: Acetyl-coenzyme A carboxylase carboxyl transferase subunit alpha (314 aa).

The CoA carboxyltransferase C-terminal domain occupies 32 to 289; the sequence is EIDMLEASLA…KRTFESHLSE (258 aa).

It belongs to the AccA family. Acetyl-CoA carboxylase is a heterohexamer composed of biotin carboxyl carrier protein (AccB), biotin carboxylase (AccC) and two subunits each of ACCase subunit alpha (AccA) and ACCase subunit beta (AccD).

It localises to the cytoplasm. The enzyme catalyses N(6)-carboxybiotinyl-L-lysyl-[protein] + acetyl-CoA = N(6)-biotinyl-L-lysyl-[protein] + malonyl-CoA. It participates in lipid metabolism; malonyl-CoA biosynthesis; malonyl-CoA from acetyl-CoA: step 1/1. Component of the acetyl coenzyme A carboxylase (ACC) complex. First, biotin carboxylase catalyzes the carboxylation of biotin on its carrier protein (BCCP) and then the CO(2) group is transferred by the carboxyltransferase to acetyl-CoA to form malonyl-CoA. This Staphylococcus saprophyticus subsp. saprophyticus (strain ATCC 15305 / DSM 20229 / NCIMB 8711 / NCTC 7292 / S-41) protein is Acetyl-coenzyme A carboxylase carboxyl transferase subunit alpha.